Here is a 1429-residue protein sequence, read N- to C-terminus: Dicer-like protein 2 (1429 aa).

Residues 21 to 200 (MFEASLKGNI…TIEMNLNSVC (180 aa)) enclose the Helicase ATP-binding domain. Residue 34–41 (MGTGSGKT) participates in ATP binding. A DEAH box motif is present at residues 141 to 144 (DEAH). Positions 335 to 501 (ALISFLMSTE…EDRRRTEELR (167 aa)) constitute a Helicase C-terminal domain. One can recognise a Dicer dsRNA-binding fold domain in the interval 528-622 (AMQHLVHFCD…LPLTKSREFT (95 aa)). 2 consecutive RNase III domains span residues 874 to 1014 (ATRL…IDGG) and 1056 to 1250 (QENL…VDSG). Residues glutamate 1095, aspartate 1236, and glutamate 1239 each contribute to the Mg(2+) site.

The protein belongs to the helicase family. Dicer subfamily. Mg(2+) is required as a cofactor. Requires Mn(2+) as cofactor.

Dicer-like endonuclease involved in cleaving double-stranded RNA in the RNA interference (RNAi) pathway. Produces 21 to 25 bp dsRNAs (siRNAs) which target the selective destruction of homologous RNAs leading to sequence-specific suppression of gene expression, called post-transcriptional gene silencing (PTGS). Part of a broad host defense response against viral infection and transposons. The chain is Dicer-like protein 2 (dcl2) from Emericella nidulans (strain FGSC A4 / ATCC 38163 / CBS 112.46 / NRRL 194 / M139) (Aspergillus nidulans).